Consider the following 474-residue polypeptide: Cyclin-dependent kinase 18 (474 aa).

Residues serine 14, serine 74, serine 89, serine 98, serine 117, and serine 132 each carry the phosphoserine modification. The segment at 44–93 (NLQLGPLGRDPPQECSTFSPTDSGEEPGQLSPGVQFQRRQNQRRFSMEDV) is disordered. Residues 144 to 425 (YVKLDKLGEG…AEAALSHSYF (282 aa)) enclose the Protein kinase domain. ATP-binding positions include 150–158 (LGEGTYATV) and lysine 173. The active-site Proton acceptor is aspartate 265. A phosphoserine mark is found at serine 440 and serine 443.

This sequence belongs to the protein kinase superfamily. CMGC Ser/Thr protein kinase family. CDC2/CDKX subfamily. In terms of tissue distribution, isoform 2 expression is limited to several subcortical nuclei of the basal gangli and the spinal cord. Isoform 1 is widely expressed.

It carries out the reaction L-seryl-[protein] + ATP = O-phospho-L-seryl-[protein] + ADP + H(+). It catalyses the reaction L-threonyl-[protein] + ATP = O-phospho-L-threonyl-[protein] + ADP + H(+). May play a role in signal transduction cascades in terminally differentiated cells. In Homo sapiens (Human), this protein is Cyclin-dependent kinase 18 (CDK18).